The primary structure comprises 214 residues: Adenylate kinase (214 aa).

10–15 (GAGKGT) contacts ATP. Residues 30–59 (STGDMLRAAIKAGTELGLEAKRVMDEGKLV) form an NMP region. AMP is bound by residues Thr-31, Arg-36, 57–59 (KLV), 85–88 (GFPR), and Gln-92. The segment at 122-159 (GRRVHPASGRVYHVVYNPPKVEGKDNETGDDLIVRDDD) is LID. Residues Arg-123 and 132–133 (VY) each bind ATP. Arg-156 and Arg-167 together coordinate AMP. Arg-200 contacts ATP.

This sequence belongs to the adenylate kinase family. Monomer.

It localises to the cytoplasm. It carries out the reaction AMP + ATP = 2 ADP. It functions in the pathway purine metabolism; AMP biosynthesis via salvage pathway; AMP from ADP: step 1/1. In terms of biological role, catalyzes the reversible transfer of the terminal phosphate group between ATP and AMP. Plays an important role in cellular energy homeostasis and in adenine nucleotide metabolism. The sequence is that of Adenylate kinase from Alteromonas mediterranea (strain DSM 17117 / CIP 110805 / LMG 28347 / Deep ecotype).